Consider the following 138-residue polypeptide: Phosphoribosyl-AMP cyclohydrolase (138 aa).

Aspartate 84 is a Mg(2+) binding site. Cysteine 85 provides a ligand contact to Zn(2+). Mg(2+) is bound by residues aspartate 86 and aspartate 88. Zn(2+)-binding residues include cysteine 102 and cysteine 109.

Belongs to the PRA-CH family. In terms of assembly, homodimer. Mg(2+) serves as cofactor. The cofactor is Zn(2+).

Its subcellular location is the cytoplasm. The catalysed reaction is 1-(5-phospho-beta-D-ribosyl)-5'-AMP + H2O = 1-(5-phospho-beta-D-ribosyl)-5-[(5-phospho-beta-D-ribosylamino)methylideneamino]imidazole-4-carboxamide. It participates in amino-acid biosynthesis; L-histidine biosynthesis; L-histidine from 5-phospho-alpha-D-ribose 1-diphosphate: step 3/9. Catalyzes the hydrolysis of the adenine ring of phosphoribosyl-AMP. The sequence is that of Phosphoribosyl-AMP cyclohydrolase from Burkholderia lata (strain ATCC 17760 / DSM 23089 / LMG 22485 / NCIMB 9086 / R18194 / 383).